We begin with the raw amino-acid sequence, 783 residues long: MPDVLSNDLLQKMDAYWRAANYLSVGQIYLQDNPLLDQKLQLDHIKPRLLGHWGTTPGLNLLYVHLNRLITEHDLDMIYITGPGHGGPGLVANAYLEGTYTERYPAIERSRNGMQRLFRQFSWPHGVPSHVSPETPGSIHEGGELGYSLAHAYGAAFDNPNLIVACVVGDGEAETGALATSWHSNKFLNPARDGAVLPILHLNGFKIANPTVLARITPQELTDLMRGYGYEPHFVEGDDPAVVHQTLAATLERVLGEIRAIQDKARNHGDTERPRWPMIVMRTPKGWTGPKQVDGKPVEGTWRAHQVPIADFKNPEHLTLLEDWMRSYRPDELFDATGKLRDELQALAPTGRRRMSANPHANGGELLEPLSLPDFHDYAVTLTGPGALKAEATRVLGTFLRDVMKNSLESENFRLFGPDETASNRLDAVLQVSPKEWMAAIEDVDVDLSPDGRVMEVLSEHLCQGWLEGYLLTGRHGFFSCYEAFIHIIDSMFNQHAKWLKACATIPWRKPIASLNYLLTSHVWRQDHNGFSHQDPGFIDHVANKKSNVVRIYLPPDANCLLSVADHCLRSRNYVNLIVAGKQPEWQWLDIDAAVRHCTTGAGIWHWASDEGEPDVVMACAGDVPTVETLAAVKLLREYVPDIKIRVVNVVDLMVLQPSSEHPHGLDDRRFDELFTTDKPVIFAFHGYPWLIHRLTYRRRNHVNIHVRGYKEEGTTTTPFDMVVLNDLDRYRLALDAILRIPRLADQRDAATSRYWATMQRHKLYIGEHGDDLPEVRDWRWSA.

Belongs to the XFP family. Requires thiamine diphosphate as cofactor.

In Rhodopseudomonas palustris (strain TIE-1), this protein is Probable phosphoketolase.